The chain runs to 439 residues: Proline--tRNA ligase (439 aa).

It belongs to the class-II aminoacyl-tRNA synthetase family. ProS type 2 subfamily. Homodimer.

The protein resides in the cytoplasm. The enzyme catalyses tRNA(Pro) + L-proline + ATP = L-prolyl-tRNA(Pro) + AMP + diphosphate. Catalyzes the attachment of proline to tRNA(Pro) in a two-step reaction: proline is first activated by ATP to form Pro-AMP and then transferred to the acceptor end of tRNA(Pro). This chain is Proline--tRNA ligase, found in Bradyrhizobium diazoefficiens (strain JCM 10833 / BCRC 13528 / IAM 13628 / NBRC 14792 / USDA 110).